A 385-amino-acid chain; its full sequence is Leucine aminopeptidase 1 (385 aa).

Positions 1–20 (MKFPSLLSLGVAASTTIVAA) are cleaved as a signal peptide. Residues 21 to 87 (VPDQKPIGDI…FPKTFAQTTV (67 aa)) constitute a propeptide that is removed on maturation. A glycan (N-linked (GlcNAc...) asparagine) is linked at N177. H185, D204, E243, and D270 together coordinate Zn(2+). Cysteines 319 and 323 form a disulfide. H352 is a binding site for Zn(2+).

It belongs to the peptidase M28 family. M28E subfamily. Monomer. The cofactor is Zn(2+).

Its subcellular location is the secreted. Functionally, extracellular aminopeptidase that allows assimilation of proteinaceous substrates. This is Leucine aminopeptidase 1 (LAP1) from Ajellomyces capsulatus (strain G186AR / H82 / ATCC MYA-2454 / RMSCC 2432) (Darling's disease fungus).